The sequence spans 329 residues: Deoxynucleotidyltransferase terminal-interacting protein 1 (329 aa).

Disordered stretches follow at residues M1–E22 and K147–S178. The interval M56–K147 is important for dimerization. The span at K147–H158 shows a compositional bias: basic and acidic residues. Residues R159–G173 constitute a DNA-binding region (a.T hook). Residue S161 is modified to Phosphoserine. A Nuclear localization signal motif is present at residues P164–R170. The interval R197–T316 is important for DNA and nucleosome binding. The segment at residues G216–P237 is a DNA-binding region (H-T-H motif).

As to quaternary structure, monomer and homodimer. A minor proportion may form homotrimers. Interacts with ZNF541. Interacts with the terminal deoxynucleotidyltransferase DNTT. Interacts with TRERF1. Identified in a histone deacetylase complex that contains DNTTIP1, HDAC1 and MIDEAS; this complex assembles into a tetramer that contains four copies of each protein chain. Component of a histone deacetylase complex containing DNTTIP1, ZNF541, HDAC1 and HDAC2. Identified in a complex with KCTD19, HDAC1, HDAC2 and ZNF541.

The protein resides in the nucleus. Functionally, increases DNTT terminal deoxynucleotidyltransferase activity (in vitro). Also acts as a transcriptional regulator, binding to the consensus sequence 5'-GNTGCATG-3' following an AT-tract. Associates with RAB20 promoter and positively regulates its transcription. Binds DNA and nucleosomes; may recruit HDAC1 complexes to nucleosomes or naked DNA. This chain is Deoxynucleotidyltransferase terminal-interacting protein 1 (DNTTIP1), found in Pongo abelii (Sumatran orangutan).